We begin with the raw amino-acid sequence, 132 residues long: Small ribosomal subunit protein uS9 (132 aa).

Belongs to the universal ribosomal protein uS9 family.

In Leptospira interrogans serogroup Icterohaemorrhagiae serovar copenhageni (strain Fiocruz L1-130), this protein is Small ribosomal subunit protein uS9.